We begin with the raw amino-acid sequence, 455 residues long: Oxidative stress induced growth inhibitor homolog osgn-1 (455 aa).

The protein belongs to the OKL38 family. The cofactor is NADPH.

It is found in the midbody. Its function is as follows. Monooxygenase catalytic activity. Involved in regulation of cytokinesis; promotes rho-1/RhoA activity, probably acting locally at the midbody in late cytokinesis. Monooxygenase activity is required to stabilize structures between primordial germ cells (PGCs), termed intercellular bridges. Dispensable for fertility. In Caenorhabditis elegans, this protein is Oxidative stress induced growth inhibitor homolog osgn-1.